The primary structure comprises 342 residues: Replication factor C subunit 4 (342 aa).

ATP contacts are provided by residues Val-24, Val-36, 61–68 (GMPGIGKT), Asn-157, and Arg-215.

This sequence belongs to the activator 1 small subunits family. As to quaternary structure, heteropentamer of subunits rfc1, rfc2, rfc3, rfc4 and rfc5 that forms a complex (RFC) with PCNA in the presence of ATP. Two other complexes exist where rfc1 can be replaced by either ctf18 or elg1 to form the ctf18-RFC or the elg1-RFC complexes respectively.

It is found in the nucleus. Its function is as follows. The elongation of primed DNA templates by DNA polymerase delta and epsilon requires the action of the accessory proteins PCNA and activator 1. In Schizosaccharomyces pombe (strain 972 / ATCC 24843) (Fission yeast), this protein is Replication factor C subunit 4 (rfc4).